The following is an 83-amino-acid chain: U2-hexatoxin-Hi1a (83 aa).

Positions 1–23 (MRNTTFLVLNVMLLVSVALFCAA) are cleaved as a signal peptide. Positions 24–45 (DPEMEKSSFAEILDTGNPEQER) are excised as a propeptide. Cystine bridges form between cysteine 47–cysteine 63, cysteine 54–cysteine 68, cysteine 62–cysteine 78, and cysteine 70–cysteine 76.

The protein belongs to the neurotoxin 07 (Beta/delta-agtx) family. As to expression, expressed by the venom gland.

The protein localises to the secreted. Its function is as follows. Inhibits sodium channels (Nav) of insects. This is U2-hexatoxin-Hi1a from Hadronyche infensa (Fraser island funnel-web spider).